We begin with the raw amino-acid sequence, 200 residues long: Large ribosomal subunit protein uL4 (200 aa).

Residues 43–71 are disordered; sequence RAQKTRAEVSGSGKKPWRQKGTGRARSGD.

This sequence belongs to the universal ribosomal protein uL4 family. In terms of assembly, part of the 50S ribosomal subunit.

One of the primary rRNA binding proteins, this protein initially binds near the 5'-end of the 23S rRNA. It is important during the early stages of 50S assembly. It makes multiple contacts with different domains of the 23S rRNA in the assembled 50S subunit and ribosome. Functionally, forms part of the polypeptide exit tunnel. This is Large ribosomal subunit protein uL4 from Actinobacillus pleuropneumoniae serotype 5b (strain L20).